The following is a 490-amino-acid chain: Cardiolipin synthase A (490 aa).

The next 2 helical transmembrane spans lie at 4-24 (YLFT…IIIV) and 39-59 (AAWL…WFLL). PLD phosphodiesterase domains lie at 220–247 (MDLR…VDPY) and 403–430 (KKGL…DMRS). Catalysis depends on residues H225, K227, D232, H408, K410, and D415.

This sequence belongs to the phospholipase D family. Cardiolipin synthase subfamily. ClsA sub-subfamily.

The protein localises to the cell membrane. It catalyses the reaction 2 a 1,2-diacyl-sn-glycero-3-phospho-(1'-sn-glycerol) = a cardiolipin + glycerol. Functionally, catalyzes the reversible phosphatidyl group transfer from one phosphatidylglycerol molecule to another to form cardiolipin (CL) (diphosphatidylglycerol) and glycerol. This chain is Cardiolipin synthase A, found in Buchnera aphidicola subsp. Baizongia pistaciae (strain Bp).